A 1199-amino-acid chain; its full sequence is Pyruvate-flavodoxin oxidoreductase (1199 aa).

4Fe-4S ferredoxin-type domains are found at residues 699 to 728 (EIPV…AKVY) and 755 to 784 (FTIQ…EPSL). [4Fe-4S] cluster contacts are provided by C708, C711, C714, C718, C764, C767, C770, C774, C838, C841, C866, and C1103.

This sequence belongs to the pyruvate:ferredoxin/flavodoxin oxidoreductase family. [4Fe-4S] cluster serves as cofactor.

The enzyme catalyses oxidized [flavodoxin] + pyruvate + CoA + 2 H(+) = reduced [flavodoxin] + acetyl-CoA + CO2. Oxidoreductase required for the transfer of electrons from pyruvate to flavodoxin, which reduces nitrogenase. This Nostoc sp. (strain PCC 7120 / SAG 25.82 / UTEX 2576) protein is Pyruvate-flavodoxin oxidoreductase (nifJ).